The sequence spans 218 residues: Capsid protein (218 aa).

The residue at position 1 (M1) is an N-acetylmethionine; by host. Positions 1 to 10 (MDKSDSASAG) are enriched in low complexity. Residues 1–28 (MDKSDSASAGRNRRRRPRRGSRSASSSA) are disordered. The span at 11 to 21 (RNRRRRPRRGS) shows a compositional bias: basic residues.

This sequence belongs to the cucumovirus capsid protein family.

It localises to the virion. Capsid protein. Probably binds RNA and plays a role in packaging. In Cucumber mosaic virus (strain M48) (CMV), this protein is Capsid protein.